The chain runs to 78 residues: Bowman-Birk type proteinase inhibitors I-A, I-B, and I-A' (78 aa).

Intrachain disulfides connect Cys-18/Cys-72, Cys-19/Cys-34, Cys-22/Cys-68, Cys-24/Cys-32, Cys-42/Cys-49, Cys-46/Cys-61, and Cys-51/Cys-59.

Belongs to the Bowman-Birk serine protease inhibitor family.

In terms of biological role, these inhibitors strongly inhibit trypsin. This chain is Bowman-Birk type proteinase inhibitors I-A, I-B, and I-A', found in Phaseolus angularis (Azuki bean).